The following is a 60-amino-acid chain: Large ribosomal subunit protein uL30 (60 aa).

The protein belongs to the universal ribosomal protein uL30 family. In terms of assembly, part of the 50S ribosomal subunit.

The polypeptide is Large ribosomal subunit protein uL30 (Cupriavidus metallidurans (strain ATCC 43123 / DSM 2839 / NBRC 102507 / CH34) (Ralstonia metallidurans)).